The primary structure comprises 83 residues: Alpha-toxin CvIV4 (83 aa).

Residues 1–19 (MNYFILILVAALLILDVNC) form the signal peptide. The LCN-type CS-alpha/beta domain occupies 21 to 79 (KDGYPVEHSGCKYTCWKNEYCDKVCKDLKGEGGYCYINLTCWCTGLPDNVPLKTNQRCN). 4 disulfide bridges follow: C31–C78, C35–C55, C41–C61, and C45–C63.

This sequence belongs to the long (4 C-C) scorpion toxin superfamily. Sodium channel inhibitor family. As to expression, expressed by the venom gland.

It is found in the secreted. Functionally, this toxin significantly slows the fast inactivation of Nav1.2/SCN2A (EC(50)=580 nM), Nav1.3/SCN3A (EC(50)=1310 nM), Nav1.4/SCN4A (EC(50)=530 nM), and Nav1.7/SCN9A (EC(50)=1340 nM). The toxin does not affect the peak amplitude of Nav1.7 currents. On all channels cited above, the toxin requires depolarizing potentials to slow channel inactivation. In addition, the toxin has no or very weak effects on the voltage-dependence of steady-state inactivation, and on voltage-dependence of activation. In vivo, it produces paw licking in mice equivalent to the effects of whole venom. This chain is Alpha-toxin CvIV4, found in Centruroides vittatus (Striped bark scorpion).